The following is a 241-amino-acid chain: Urease accessory protein UreF 1 (241 aa).

The protein belongs to the UreF family. As to quaternary structure, ureD, UreF and UreG form a complex that acts as a GTP-hydrolysis-dependent molecular chaperone, activating the urease apoprotein by helping to assemble the nickel containing metallocenter of UreC. The UreE protein probably delivers the nickel.

Its subcellular location is the cytoplasm. Functionally, required for maturation of urease via the functional incorporation of the urease nickel metallocenter. In Brucella melitensis biotype 1 (strain ATCC 23456 / CCUG 17765 / NCTC 10094 / 16M), this protein is Urease accessory protein UreF 1.